Here is a 119-residue protein sequence, read N- to C-terminus: Ribosome-binding factor A (119 aa).

It belongs to the RbfA family. Monomer. Binds 30S ribosomal subunits, but not 50S ribosomal subunits or 70S ribosomes.

The protein resides in the cytoplasm. In terms of biological role, one of several proteins that assist in the late maturation steps of the functional core of the 30S ribosomal subunit. Associates with free 30S ribosomal subunits (but not with 30S subunits that are part of 70S ribosomes or polysomes). Required for efficient processing of 16S rRNA. May interact with the 5'-terminal helix region of 16S rRNA. This chain is Ribosome-binding factor A, found in Pseudothermotoga lettingae (strain ATCC BAA-301 / DSM 14385 / NBRC 107922 / TMO) (Thermotoga lettingae).